A 491-amino-acid polypeptide reads, in one-letter code: MANYFNTLNLRQQLAQLGKCRFMGRDEFADGASYLQGKKVVIVGCGAQGLNQGLNMRDSGLDISYALRKEAIAEKRASWRKATENGFKVGTYEELIPQADLVVNLTPDKQHSDVVRSVQPLMKDGAALGYSHGFNIVEVGEQIRKDITVVMVAPKCPGTEVREEYKRGFGVPTLIAVHPENDPKGEGMAIAKAWAAATGGHRAGVLESSFVAEVKSDLMGEQTILCGMLQAGSLLCFDKLVEEGTDPAYAEKLIQFGWETITEALKQGGITLMMDRLSNPAKLRAYALSEQLKEIMAPLFQKHMDDIISGEFSSGMMADWANDDKKLLTWREETGKTAFETAPQYEGKIGEQEYFDKGVLMIAMVKAGVELAFETMVDSGIIEESAYYESLHELPLIANTIARKRLYEMNVVISDTAEYGNYLFSYACVPLLKPFMAELQPGDLGKAIPEGAVDNAQLRDVNEAIRSHAIEQVGKKLRGYMTDMKRIAVAG.

Positions 15 to 208 constitute a KARI N-terminal Rossmann domain; it reads AQLGKCRFMG…GGHRAGVLES (194 aa). NADP(+)-binding positions include 45-48, Arg68, Arg76, Ser78, and 108-110; these read CGAQ and DKQ. His132 is an active-site residue. Gly158 lines the NADP(+) pocket. KARI C-terminal knotted domains are found at residues 209-344 and 345-484; these read SFVA…TAPQ and YEGK…MTDM. Asp217, Glu221, Glu389, and Glu393 together coordinate Mg(2+). Ser414 serves as a coordination point for substrate.

The protein belongs to the ketol-acid reductoisomerase family. Mg(2+) is required as a cofactor.

It catalyses the reaction (2R)-2,3-dihydroxy-3-methylbutanoate + NADP(+) = (2S)-2-acetolactate + NADPH + H(+). The enzyme catalyses (2R,3R)-2,3-dihydroxy-3-methylpentanoate + NADP(+) = (S)-2-ethyl-2-hydroxy-3-oxobutanoate + NADPH + H(+). It functions in the pathway amino-acid biosynthesis; L-isoleucine biosynthesis; L-isoleucine from 2-oxobutanoate: step 2/4. The protein operates within amino-acid biosynthesis; L-valine biosynthesis; L-valine from pyruvate: step 2/4. Involved in the biosynthesis of branched-chain amino acids (BCAA). Catalyzes an alkyl-migration followed by a ketol-acid reduction of (S)-2-acetolactate (S2AL) to yield (R)-2,3-dihydroxy-isovalerate. In the isomerase reaction, S2AL is rearranged via a Mg-dependent methyl migration to produce 3-hydroxy-3-methyl-2-ketobutyrate (HMKB). In the reductase reaction, this 2-ketoacid undergoes a metal-dependent reduction by NADPH to yield (R)-2,3-dihydroxy-isovalerate. The protein is Ketol-acid reductoisomerase (NADP(+)) of Escherichia coli (strain UTI89 / UPEC).